We begin with the raw amino-acid sequence, 322 residues long: MEPQNTSTVTNFQLLGFQNLLEWQALLFVIFLLIYCLTIIGNVVIITVVSQGLRLHSPMYMFLQHLSFLEVWYTSTTVPLLLANLLSWGQAISFSACMAQLYFFVFLGATECFLLAFMAYDRYLAICSPLRYPFLMHRGLCARLVVVSWCTGVSTGFLPSLMISRLDFCGRNQINHFFCDLPPLMQLSCSRVYITEVTIFILSIAVLCICFFLTLGPYVFIVSSILRIPSTSGRRKTFSTCGSHLAVVTLYYGTMISMYVCPSPHLLPEINKIISVFYTVVTPLLNPVIYSLRNKDFKEAVRKVMRRKCGILWSTSKRKFLY.

Residues 1–25 (MEPQNTSTVTNFQLLGFQNLLEWQA) lie on the Extracellular side of the membrane. Asn-5 is a glycosylation site (N-linked (GlcNAc...) asparagine). The chain crosses the membrane as a helical span at residues 26–46 (LLFVIFLLIYCLTIIGNVVII). Residues 47–54 (TVVSQGLR) are Cytoplasmic-facing. Residues 55–75 (LHSPMYMFLQHLSFLEVWYTS) form a helical membrane-spanning segment. Over 76–99 (TTVPLLLANLLSWGQAISFSACMA) the chain is Extracellular. Cys-97 and Cys-189 are oxidised to a cystine. Residues 100–120 (QLYFFVFLGATECFLLAFMAY) traverse the membrane as a helical segment. Residues 121–139 (DRYLAICSPLRYPFLMHRG) lie on the Cytoplasmic side of the membrane. The chain crosses the membrane as a helical span at residues 140 to 160 (LCARLVVVSWCTGVSTGFLPS). Topologically, residues 161–197 (LMISRLDFCGRNQINHFFCDLPPLMQLSCSRVYITEV) are extracellular. The helical transmembrane segment at 198–217 (TIFILSIAVLCICFFLTLGP) threads the bilayer. The Cytoplasmic segment spans residues 218–237 (YVFIVSSILRIPSTSGRRKT). A helical transmembrane segment spans residues 238–258 (FSTCGSHLAVVTLYYGTMISM). At 259–271 (YVCPSPHLLPEIN) the chain is on the extracellular side. Residues 272–292 (KIISVFYTVVTPLLNPVIYSL) traverse the membrane as a helical segment. Residues 293–322 (RNKDFKEAVRKVMRRKCGILWSTSKRKFLY) lie on the Cytoplasmic side of the membrane.

The protein belongs to the G-protein coupled receptor 1 family.

It is found in the cell membrane. Odorant receptor. In Homo sapiens (Human), this protein is Olfactory receptor 11L1 (OR11L1).